We begin with the raw amino-acid sequence, 68 residues long: Alpha-conotoxin-like Lp1.2 (68 aa).

An N-terminal signal peptide occupies residues 1–21 (MGMRMMFTVFLLVVLATTVVS). A propeptide spanning residues 22–48 (FTSDRAFDGRNAAASDKASDLISLAVR) is cleaved from the precursor. Intrachain disulfides connect Cys50–Cys56 and Cys51–Cys64. Positions 52 to 54 (SHP) are ser-Xaa-Pro motif, crucial for potent interaction with nAChR. Cys64 is subject to Cysteine amide. The propeptide occupies 65 to 68 (GGKR).

The protein belongs to the conotoxin A superfamily. In terms of tissue distribution, expressed by the venom duct.

It localises to the secreted. In terms of biological role, alpha-conotoxins act on postsynaptic membranes, they bind to the nicotinic acetylcholine receptors (nAChR) and thus inhibit them. This is Alpha-conotoxin-like Lp1.2 from Conus leopardus (Leopard cone).